Consider the following 150-residue polypeptide: Cytochrome c oxidase subunit 5A, mitochondrial (150 aa).

The N-terminal 41 residues, 1 to 41 (MLGAALRRCAVAATTWAGPRGLLHSARTPGPAAAIQSVRCY), are a transit peptide targeting the mitochondrion. The short motif at 2–20 (LGAALRRCAVAATTWAGPR) is the SIFI-degron element. N6-acetyllysine occurs at positions 87 and 113. Threonine 141 is modified (phosphothreonine).

This sequence belongs to the cytochrome c oxidase subunit 5A family. Component of the cytochrome c oxidase (complex IV, CIV), a multisubunit enzyme composed of 14 subunits. The complex is composed of a catalytic core of 3 subunits MT-CO1, MT-CO2 and MT-CO3, encoded in the mitochondrial DNA, and 11 supernumerary subunits COX4I, COX5A, COX5B, COX6A, COX6B, COX6C, COX7A, COX7B, COX7C, COX8 and NDUFA4, which are encoded in the nuclear genome. The complex exists as a monomer or a dimer and forms supercomplexes (SCs) in the inner mitochondrial membrane with NADH-ubiquinone oxidoreductase (complex I, CI) and ubiquinol-cytochrome c oxidoreductase (cytochrome b-c1 complex, complex III, CIII), resulting in different assemblies (supercomplex SCI(1)III(2)IV(1) and megacomplex MCI(2)III(2)IV(2)). Interacts with AFG1L. Interacts with RAB5IF. Post-translationally, in response to mitochondrial stress, the precursor protein is ubiquitinated by the SIFI complex in the cytoplasm before mitochondrial import, leading to its degradation. Within the SIFI complex, UBR4 initiates ubiquitin chain that are further elongated or branched by KCMF1.

Its subcellular location is the mitochondrion inner membrane. It participates in energy metabolism; oxidative phosphorylation. Its function is as follows. Component of the cytochrome c oxidase, the last enzyme in the mitochondrial electron transport chain which drives oxidative phosphorylation. The respiratory chain contains 3 multisubunit complexes succinate dehydrogenase (complex II, CII), ubiquinol-cytochrome c oxidoreductase (cytochrome b-c1 complex, complex III, CIII) and cytochrome c oxidase (complex IV, CIV), that cooperate to transfer electrons derived from NADH and succinate to molecular oxygen, creating an electrochemical gradient over the inner membrane that drives transmembrane transport and the ATP synthase. Cytochrome c oxidase is the component of the respiratory chain that catalyzes the reduction of oxygen to water. Electrons originating from reduced cytochrome c in the intermembrane space (IMS) are transferred via the dinuclear copper A center (CU(A)) of subunit 2 and heme A of subunit 1 to the active site in subunit 1, a binuclear center (BNC) formed by heme A3 and copper B (CU(B)). The BNC reduces molecular oxygen to 2 water molecules using 4 electrons from cytochrome c in the IMS and 4 protons from the mitochondrial matrix. In Macaca mulatta (Rhesus macaque), this protein is Cytochrome c oxidase subunit 5A, mitochondrial (COX5A).